Reading from the N-terminus, the 251-residue chain is Probable transcriptional regulatory protein SYNPCC7002_A0851 (251 aa).

The Response regulatory domain maps to 20 to 141; that stretch reads RILVVEDEAV…ELVARCRALL (122 aa). Asp-76 is subject to 4-aspartylphosphate. Positions 153-251 form a DNA-binding region, ompR/PhoB-type; it reads NSVRQFKDIS…TVRGFGYRFG (99 aa).

In terms of processing, phosphorylation.

This Picosynechococcus sp. (strain ATCC 27264 / PCC 7002 / PR-6) (Agmenellum quadruplicatum) protein is Probable transcriptional regulatory protein SYNPCC7002_A0851.